Reading from the N-terminus, the 288-residue chain is Bifunctional protein FolD 1 (288 aa).

NADP(+)-binding positions include 170 to 172 (GPG) and I236.

This sequence belongs to the tetrahydrofolate dehydrogenase/cyclohydrolase family. In terms of assembly, homodimer.

It carries out the reaction (6R)-5,10-methylene-5,6,7,8-tetrahydrofolate + NADP(+) = (6R)-5,10-methenyltetrahydrofolate + NADPH. The enzyme catalyses (6R)-5,10-methenyltetrahydrofolate + H2O = (6R)-10-formyltetrahydrofolate + H(+). Its pathway is one-carbon metabolism; tetrahydrofolate interconversion. Catalyzes the oxidation of 5,10-methylenetetrahydrofolate to 5,10-methenyltetrahydrofolate and then the hydrolysis of 5,10-methenyltetrahydrofolate to 10-formyltetrahydrofolate. This Deinococcus geothermalis (strain DSM 11300 / CIP 105573 / AG-3a) protein is Bifunctional protein FolD 1.